The sequence spans 306 residues: Galactosylgalactosylxylosylprotein 3-beta-glucuronosyltransferase I (306 aa).

The Cytoplasmic segment spans residues methionine 1–valine 11. Residues leucine 12 to glycine 29 traverse the membrane as a helical; Signal-anchor for type II membrane protein segment. Topologically, residues lysine 30–valine 306 are lumenal. Residue asparagine 90 is glycosylated (N-linked (GlcNAc...) asparagine). Residue aspartate 163 participates in Mn(2+) binding. The Proton acceptor role is filled by glutamate 252.

This sequence belongs to the glycosyltransferase 43 family. Mn(2+) serves as cofactor.

Its subcellular location is the golgi apparatus membrane. The catalysed reaction is 3-O-(beta-D-galactosyl-(1-&gt;3)-beta-D-galactosyl-(1-&gt;4)-beta-D-xylosyl)-L-seryl-[protein] + UDP-alpha-D-glucuronate = 3-O-(beta-D-GlcA-(1-&gt;3)-beta-D-Gal-(1-&gt;3)-beta-D-Gal-(1-&gt;4)-beta-D-Xyl)-L-seryl-[protein] + UDP + H(+). It participates in protein modification; protein glycosylation. Its function is as follows. Involved in the biosynthesis of L2/HNK-1 carbohydrate epitope on both glycolipids and glycoproteins. Shows strict specificity for Gal-beta-1,3-Gal-beta-1,4-Xyl, exhibiting negligible incorporation into other galactoside substrates. The chain is Galactosylgalactosylxylosylprotein 3-beta-glucuronosyltransferase I (GlcAT-I) from Drosophila melanogaster (Fruit fly).